Here is a 403-residue protein sequence, read N- to C-terminus: Tripartite motif-containing protein 59 (403 aa).

The RING-type zinc-finger motif lies at 10–60; it reads CPICYSIFEDPRVLPCSHTFCRNCLENVLQASGNFYIWRPLRIPLKCPNCR. The B box-type zinc finger occupies 92–134; the sequence is PDVVTCPEHYRQPLNVYCLLDKKLVCGHCLTIGQHHGHPIDDL. Residues C97, H100, C120, and H126 each contribute to the Zn(2+) site. A coiled-coil region spans residues 163–246; that stretch reads LIEKLEEQKC…TITTSLQDES (84 aa). The helical transmembrane segment at 329–349 threads the bilayer; that stretch reads ILNIAIVSLISVILMLILLFN.

Belongs to the TRIM/RBCC family. As to quaternary structure, interacts with ECSIT. As to expression, moderately expressed in the spleen, brain and heart and very highly expressed in the testis.

It is found in the endoplasmic reticulum membrane. It catalyses the reaction S-ubiquitinyl-[E2 ubiquitin-conjugating enzyme]-L-cysteine + [acceptor protein]-L-lysine = [E2 ubiquitin-conjugating enzyme]-L-cysteine + N(6)-ubiquitinyl-[acceptor protein]-L-lysine.. It participates in protein modification; protein ubiquitination. In terms of biological role, E3 ubiquitin ligase involved in different processes such as development and immune response. Serves as a negative regulator for innate immune signaling pathways by suppressing RLR-induced activation of IRF3/7 and NF-kappa-B via interaction with adapter ECSIT. Regulates autophagy through modulating both the transcription and the ubiquitination of BECN1. On the one hand, regulates the transcription of BECN1 through negatively modulating the NF-kappa-B pathway. On the other hand, regulates TRAF6-mediated 'Lys-63'-linked ubiquitination of BECN1, thus affecting the formation of the BECN1-PIK3C3 complex. In addition, mediates 'Lys-48'-linked ubiquitination of TRAF6 and thereby promotes TRAF6 proteasomal degradation. Also acts as a critical regulator for early embryo development from blastocyst stage to gastrula through modulating F-actin assembly and WASH1 'Lys-63'-linked ubiquitination. The polypeptide is Tripartite motif-containing protein 59 (Trim59) (Mus musculus (Mouse)).